We begin with the raw amino-acid sequence, 367 residues long: Leucine-rich repeat-containing protein 28 (367 aa).

LRR repeat units lie at residues 16–36, 42–63, 66–87, 89–111, 112–133, 135–156, 158–180, 181–202, and 204–226; these read KHKNLFLNYRNLHHFPLELLK, HLERLYMKRNSLTTLPENLAQK, NLVELYLHSNNIVVVPEAIGSL, KLQCLDLSDNALEIVCPEIGGLR, ALRHLRLANNQLQFLPPEVGDL, ELQTLDISSNRLLALPERLHLC, SLQYLTVDRNRLCCVPRHLCQLP, SLNELSMAGNHLASLPIDLGRS, and ELQYVYVDNNIQLKGLPSYLYNK.

This is Leucine-rich repeat-containing protein 28 (Lrrc28) from Mus musculus (Mouse).